The sequence spans 427 residues: MAP kinase-interacting serine/threonine-protein kinase 1 (427 aa).

Residues 1–11 (MVSSQKLEKPI) are compositionally biased toward basic and acidic residues. A disordered region spans residues 1–37 (MVSSQKLEKPIEMGSSEPLPIVDSDKRRKKKRKTRAT). Thr34 carries the post-translational modification Phosphothreonine; by PAK2. Position 39 is a phosphoserine; by PAK2 (Ser39). One can recognise a Protein kinase domain in the interval 49–333 (QLTSELLGEG…AAQVLQHPWV (285 aa)). ATP is bound by residues 55 to 63 (LGEGAYAKV) and Lys78. The active-site Proton acceptor is Asp170. 2 positions are modified to phosphoserine: Ser180 and Ser185. Residues Thr209, Thr214, and Thr344 each carry the phosphothreonine modification. The segment at 407–427 (RALAQAGRSRDANPCLTPAGL) is disordered.

The protein belongs to the protein kinase superfamily. CAMK Ser/Thr protein kinase family. Interacts with the C-terminal regions of EIF4G1 and EIF4G2. Also binds to dephosphorylated ERK1 and ERK2, and to the p38 kinases. Requires Mg(2+) as cofactor. Dual phosphorylation of Thr-209 and Thr-214 activates the kinase. Phosphorylation of Thr-344 activates the kinase. MAPK3/ERK1 is one of the kinases which activate MKNK1/MNK1. Phosphorylation by PAK2 leads to a reduced phosphorylation of EIF4G1. As to expression, ubiquitously expressed in all tissues examined, with high levels in skeletal muscle.

The catalysed reaction is L-seryl-[protein] + ATP = O-phospho-L-seryl-[protein] + ADP + H(+). The enzyme catalyses L-threonyl-[protein] + ATP = O-phospho-L-threonyl-[protein] + ADP + H(+). With respect to regulation, phosphorylated and activated by the p38 kinases and kinases in the Erk pathway. Functionally, may play a role in the response to environmental stress and cytokines. Appears to regulate translation by phosphorylating EIF4E, thus increasing the affinity of this protein for the 7-methylguanosine-containing mRNA cap. The chain is MAP kinase-interacting serine/threonine-protein kinase 1 (Mknk1) from Mus musculus (Mouse).